Consider the following 362-residue polypeptide: Ferrochelatase (362 aa).

The Fe cation site is built by His212 and Glu294.

The protein belongs to the ferrochelatase family.

The protein localises to the cytoplasm. It carries out the reaction heme b + 2 H(+) = protoporphyrin IX + Fe(2+). It participates in porphyrin-containing compound metabolism; protoheme biosynthesis; protoheme from protoporphyrin-IX: step 1/1. Its function is as follows. Catalyzes the ferrous insertion into protoporphyrin IX. The sequence is that of Ferrochelatase from Leptospira biflexa serovar Patoc (strain Patoc 1 / Ames).